Here is a 127-residue protein sequence, read N- to C-terminus: uncharacterized protein (127 aa).

Positions 1 to 17 (MQGSVQIQKGNISSSYT) are enriched in polar residues. The interval 1–36 (MQGSVQIQKGNISSSYTPEKHPSHPTSANGSMSPKR) is disordered.

This is an uncharacterized protein from Treponema pallidum (strain Nichols).